A 359-amino-acid chain; its full sequence is Opine dehydrogenase (359 aa).

Belongs to the lysopine/nopaline/octopine/opine/vitopine dehydrogenases family. As to quaternary structure, homodimer.

It catalyses the reaction (2S)-2-[(R)-1-carboxyethylamino]pentanoate + NAD(+) + H2O = L-2-aminopentanoate + pyruvate + NADH + H(+). Functionally, in the forward direction also acts on secondary amine dicarboxylates such as N-(1-carboxyethyl)methionine and N-(1-carboxyethyl)phenylalanine. In the reverse direction, the enzyme also acts on neutral amino acids as an amino donor. They include L-amino acids such as 2-aminopentanoic acid, 2-aminobutyric acid, 2-aminohexanoic acid, 3-chloroalanine, O-acetylserine, methionine, isoleucine, valine, phenylalanine, leucine and alanine. This Arthrobacter sp. (strain 1C) protein is Opine dehydrogenase (odh).